We begin with the raw amino-acid sequence, 336 residues long: Holliday junction branch migration complex subunit RuvB (336 aa).

A large ATPase domain (RuvB-L) region spans residues Met-1 to Tyr-182. ATP contacts are provided by residues Leu-21, Arg-22, Gly-63, Lys-66, Thr-67, Ser-68, Glu-129 to Phe-131, Arg-172, Tyr-182, and Arg-219. Thr-67 lines the Mg(2+) pocket. The segment at Ser-183–Gly-253 is small ATPAse domain (RuvB-S). The interval Glu-256–Phe-336 is head domain (RuvB-H). Residues Arg-310 and Arg-315 each coordinate DNA.

Belongs to the RuvB family. In terms of assembly, homohexamer. Forms an RuvA(8)-RuvB(12)-Holliday junction (HJ) complex. HJ DNA is sandwiched between 2 RuvA tetramers; dsDNA enters through RuvA and exits via RuvB. An RuvB hexamer assembles on each DNA strand where it exits the tetramer. Each RuvB hexamer is contacted by two RuvA subunits (via domain III) on 2 adjacent RuvB subunits; this complex drives branch migration. In the full resolvosome a probable DNA-RuvA(4)-RuvB(12)-RuvC(2) complex forms which resolves the HJ.

It is found in the cytoplasm. The catalysed reaction is ATP + H2O = ADP + phosphate + H(+). The RuvA-RuvB-RuvC complex processes Holliday junction (HJ) DNA during genetic recombination and DNA repair, while the RuvA-RuvB complex plays an important role in the rescue of blocked DNA replication forks via replication fork reversal (RFR). RuvA specifically binds to HJ cruciform DNA, conferring on it an open structure. The RuvB hexamer acts as an ATP-dependent pump, pulling dsDNA into and through the RuvAB complex. RuvB forms 2 homohexamers on either side of HJ DNA bound by 1 or 2 RuvA tetramers; 4 subunits per hexamer contact DNA at a time. Coordinated motions by a converter formed by DNA-disengaged RuvB subunits stimulates ATP hydrolysis and nucleotide exchange. Immobilization of the converter enables RuvB to convert the ATP-contained energy into a lever motion, pulling 2 nucleotides of DNA out of the RuvA tetramer per ATP hydrolyzed, thus driving DNA branch migration. The RuvB motors rotate together with the DNA substrate, which together with the progressing nucleotide cycle form the mechanistic basis for DNA recombination by continuous HJ branch migration. Branch migration allows RuvC to scan DNA until it finds its consensus sequence, where it cleaves and resolves cruciform DNA. The protein is Holliday junction branch migration complex subunit RuvB of Helicobacter pylori (strain HPAG1).